The primary structure comprises 102 residues: Small ribosomal subunit protein uS10 (102 aa).

It belongs to the universal ribosomal protein uS10 family. In terms of assembly, part of the 30S ribosomal subunit.

In terms of biological role, involved in the binding of tRNA to the ribosomes. This Bacillus cereus (strain G9842) protein is Small ribosomal subunit protein uS10.